Here is a 350-residue protein sequence, read N- to C-terminus: Hydroxymethylglutaryl-CoA synthase (350 aa).

Glu-83 (proton donor/acceptor) is an active-site residue. Cys-115 acts as the Acyl-thioester intermediate in catalysis. (3S)-3-hydroxy-3-methylglutaryl-CoA contacts are provided by Cys-115 and Thr-156. CoA is bound at residue Arg-204. Residues Thr-206 and His-239 each coordinate (3S)-3-hydroxy-3-methylglutaryl-CoA. Residue His-239 is the Proton donor/acceptor of the active site. Position 244 (Lys-244) interacts with CoA. 2 residues coordinate (3S)-3-hydroxy-3-methylglutaryl-CoA: Asn-271 and Ser-301.

This sequence belongs to the thiolase-like superfamily. Archaeal HMG-CoA synthase family. As to quaternary structure, interacts with acetoacetyl-CoA thiolase that catalyzes the precedent step in the pathway and with a DUF35 protein. The acetoacetyl-CoA thiolase/HMG-CoA synthase complex channels the intermediate via a fused CoA-binding site, which allows for efficient coupling of the endergonic thiolase reaction with the exergonic HMGCS reaction.

The catalysed reaction is acetoacetyl-CoA + acetyl-CoA + H2O = (3S)-3-hydroxy-3-methylglutaryl-CoA + CoA + H(+). It functions in the pathway metabolic intermediate biosynthesis; (R)-mevalonate biosynthesis; (R)-mevalonate from acetyl-CoA: step 2/3. Its function is as follows. Catalyzes the condensation of acetyl-CoA with acetoacetyl-CoA to form 3-hydroxy-3-methylglutaryl-CoA (HMG-CoA). Functions in the mevalonate (MVA) pathway leading to isopentenyl diphosphate (IPP), a key precursor for the biosynthesis of isoprenoid compounds that are building blocks of archaeal membrane lipids. The protein is Hydroxymethylglutaryl-CoA synthase of Pyrococcus horikoshii (strain ATCC 700860 / DSM 12428 / JCM 9974 / NBRC 100139 / OT-3).